We begin with the raw amino-acid sequence, 85 residues long: Acyl carrier protein (85 aa).

The 77-residue stretch at 2 to 78 (SQISERVIDL…DAIAYIESHA (77 aa)) folds into the Carrier domain. Position 37 is an O-(pantetheine 4'-phosphoryl)serine (serine 37).

It belongs to the acyl carrier protein (ACP) family. Post-translationally, 4'-phosphopantetheine is transferred from CoA to a specific serine of apo-ACP by AcpS. This modification is essential for activity because fatty acids are bound in thioester linkage to the sulfhydryl of the prosthetic group.

The protein resides in the cytoplasm. The protein operates within lipid metabolism; fatty acid biosynthesis. Functionally, carrier of the growing fatty acid chain in fatty acid biosynthesis. The chain is Acyl carrier protein from Azobacteroides pseudotrichonymphae genomovar. CFP2.